Consider the following 215-residue polypeptide: Interleukin-12 subunit alpha (215 aa).

The N-terminal stretch at 1 to 22 (MCQSRYLLFLATLALLNHLSLA) is a signal peptide. Intrachain disulfides connect Cys-33/Cys-106, Cys-60/Cys-192, and Cys-81/Cys-119. A glycan (N-linked (GlcNAc...) asparagine) is linked at Asn-89.

This sequence belongs to the IL-6 superfamily. In terms of assembly, heterodimer with IL12B; disulfide-linked. This heterodimer is known as interleukin IL-12. Heterodimer with EBI3/IL27B; not disulfide-linked. This heterodimer is known as interleukin IL-35. Interacts with NBR1; this interaction promotes IL-12 secretion.

It is found in the secreted. Heterodimerizes with IL12B to form the IL-12 cytokine or with EBI3/IL27B to form the IL-35 cytokine. IL-12 is primarily produced by professional antigen-presenting cells (APCs) such as B-cells and dendritic cells (DCs) as well as macrophages and granulocytes and regulates T-cell and natural killer-cell responses, induces the production of interferon-gamma (IFN-gamma), favors the differentiation of T-helper 1 (Th1) cells and is an important link between innate resistance and adaptive immunity. Mechanistically, exerts its biological effects through a receptor composed of IL12R1 and IL12R2 subunits. Binding to the receptor results in the rapid tyrosine phosphorylation of a number of cellular substrates including the JAK family kinases TYK2 and JAK2. In turn, recruited STAT4 gets phosphorylated and translocates to the nucleus where it regulates cytokine/growth factor responsive genes. As part of IL-35, plays essential roles in maintaining the immune homeostasis of the liver microenvironment and also functions as an immune-suppressive cytokine. Mediates biological events through unconventional receptors composed of IL12RB2 and gp130/IL6ST heterodimers or homodimers. Signaling requires the transcription factors STAT1 and STAT4, which form a unique heterodimer that binds to distinct DNA sites. This chain is Interleukin-12 subunit alpha (Il12a), found in Mus musculus (Mouse).